Consider the following 41-residue polypeptide: MTTNKDTRYPIFTFRWLAVHALAIPTVFFLGSISAMQFIQR.

Residues 16-32 (WLAVHALAIPTVFFLGS) form a helical membrane-spanning segment. His-20 is a heme binding site.

Belongs to the PsbE/PsbF family. Heterodimer of an alpha subunit and a beta subunit. PSII is composed of 1 copy each of membrane proteins PsbA, PsbB, PsbC, PsbD, PsbE, PsbF, PsbH, PsbI, PsbJ, PsbK, PsbL, PsbM, PsbT, PsbY, PsbZ, Psb30/Ycf12, at least 3 peripheral proteins of the oxygen-evolving complex and a large number of cofactors. It forms dimeric complexes. Heme b serves as cofactor.

It localises to the plastid. Its subcellular location is the chloroplast thylakoid membrane. In terms of biological role, this b-type cytochrome is tightly associated with the reaction center of photosystem II (PSII). PSII is a light-driven water:plastoquinone oxidoreductase that uses light energy to abstract electrons from H(2)O, generating O(2) and a proton gradient subsequently used for ATP formation. It consists of a core antenna complex that captures photons, and an electron transfer chain that converts photonic excitation into a charge separation. The polypeptide is Cytochrome b559 subunit beta (Euglena gracilis).